Here is an 81-residue protein sequence, read N- to C-terminus: Cytochrome b559 subunit alpha (81 aa).

Residues 21–35 (VIHSITIPMLFIAGW) traverse the membrane as a helical segment. Position 23 (His-23) interacts with heme.

The protein belongs to the PsbE/PsbF family. In terms of assembly, heterodimer of an alpha subunit and a beta subunit. PSII is composed of 1 copy each of membrane proteins PsbA, PsbB, PsbC, PsbD, PsbE, PsbF, PsbH, PsbI, PsbJ, PsbK, PsbL, PsbM, PsbT, PsbX, PsbY, PsbZ, Psb30/Ycf12, peripheral proteins PsbO, CyanoQ (PsbQ), PsbU, PsbV and a large number of cofactors. It forms dimeric complexes. Heme b is required as a cofactor.

The protein resides in the cellular thylakoid membrane. This b-type cytochrome is tightly associated with the reaction center of photosystem II (PSII). PSII is a light-driven water:plastoquinone oxidoreductase that uses light energy to abstract electrons from H(2)O, generating O(2) and a proton gradient subsequently used for ATP formation. It consists of a core antenna complex that captures photons, and an electron transfer chain that converts photonic excitation into a charge separation. The protein is Cytochrome b559 subunit alpha of Rippkaea orientalis (strain PCC 8801 / RF-1) (Cyanothece sp. (strain PCC 8801)).